Consider the following 333-residue polypeptide: Glycerol-3-phosphate dehydrogenase [NAD(P)+] (333 aa).

Positions 16, 36, and 109 each coordinate NADPH. Positions 109, 137, and 139 each coordinate sn-glycerol 3-phosphate. NADPH is bound at residue alanine 141. Sn-glycerol 3-phosphate is bound by residues lysine 192, aspartate 245, serine 255, arginine 256, and asparagine 257. Lysine 192 (proton acceptor) is an active-site residue. Arginine 256 is an NADPH binding site. 2 residues coordinate NADPH: valine 280 and glutamate 282.

It belongs to the NAD-dependent glycerol-3-phosphate dehydrogenase family.

It localises to the cytoplasm. It carries out the reaction sn-glycerol 3-phosphate + NAD(+) = dihydroxyacetone phosphate + NADH + H(+). The catalysed reaction is sn-glycerol 3-phosphate + NADP(+) = dihydroxyacetone phosphate + NADPH + H(+). Its pathway is membrane lipid metabolism; glycerophospholipid metabolism. Functionally, catalyzes the reduction of the glycolytic intermediate dihydroxyacetone phosphate (DHAP) to sn-glycerol 3-phosphate (G3P), the key precursor for phospholipid synthesis. This chain is Glycerol-3-phosphate dehydrogenase [NAD(P)+], found in Parvibaculum lavamentivorans (strain DS-1 / DSM 13023 / NCIMB 13966).